A 293-amino-acid chain; its full sequence is Diaminopimelate epimerase (293 aa).

Substrate is bound by residues N11 and N78. Residue C87 is the Proton donor of the active site. Residues 88–89 (GN), N166, N202, and 220–221 (ER) contribute to the substrate site. The active-site Proton acceptor is the C229. A substrate-binding site is contributed by 230 to 231 (GT).

It belongs to the diaminopimelate epimerase family. In terms of assembly, homodimer.

Its subcellular location is the cytoplasm. It catalyses the reaction (2S,6S)-2,6-diaminopimelate = meso-2,6-diaminopimelate. The protein operates within amino-acid biosynthesis; L-lysine biosynthesis via DAP pathway; DL-2,6-diaminopimelate from LL-2,6-diaminopimelate: step 1/1. Its function is as follows. Catalyzes the stereoinversion of LL-2,6-diaminopimelate (L,L-DAP) to meso-diaminopimelate (meso-DAP), a precursor of L-lysine and an essential component of the bacterial peptidoglycan. In Mycobacterium sp. (strain JLS), this protein is Diaminopimelate epimerase.